The chain runs to 369 residues: MTTAVPRLIEQFEHGLDAPICLTWELTYACNLACVHCLSSSGKRDPGELSTRQCQDIIDELERMQVFYVNIGGGEPTVRPDFWELVDYATAHHVGVKFSTNGVRINPEVAARLAASDCVDVQISLDGATAEVNDAVRGAGSFAMAVRALENLAAAGFADAKISVVVTRHNVGQLDDFAALADRYGATLRITRLRPSGRGADVWEELHPTAAQQVALYDWLVAKGERVLTGDSFFHLAPLGSSGALAGLNMCGAGRVVCLIDPVGDVYACPFAIHDRFLAGNVLTDGGFDQVWKNAPLFRQLREPQSAGACGSCGHYDSCRGGCMAAKFFTGLPLDGPDPECVQGYGAPALAQERHAPRPRVDHSRGSRE.

The region spanning 16 to 232 (LDAPICLTWE…KGERVLTGDS (217 aa)) is the Radical SAM core domain. [4Fe-4S] cluster-binding residues include cysteine 30, cysteine 34, cysteine 37, cysteine 251, cysteine 258, cysteine 269, cysteine 310, cysteine 313, cysteine 319, cysteine 323, and cysteine 341. The interval 347-369 (APALAQERHAPRPRVDHSRGSRE) is disordered. Over residues 352–369 (QERHAPRPRVDHSRGSRE) the composition is skewed to basic and acidic residues.

It belongs to the radical SAM superfamily. MftC family. As to quaternary structure, interacts with MftB. [4Fe-4S] cluster is required as a cofactor.

It catalyses the reaction [mycofactocin precursor peptide]-C-terminal glycyl-L-valyl-L-tyrosine + S-adenosyl-L-methionine = [mycofactocin precursor peptide]-C-terminal glycyl-N-{[2-(4-hydroxyphenyl)ethenyl]-3-methylbutanamide} + 5'-deoxyadenosine + L-methionine + CO2. The enzyme catalyses [mycofactocin precursor peptide]-C-terminal glycyl-N-{[2-(4-hydroxyphenyl)ethenyl]-3-methylbutanamide} + AH2 + S-adenosyl-L-methionine = [mycofactocin precursor peptide]-C-terminal glycyl-N-{5-[(4-hydroxyphenyl)methyl]-4,4-dimethyl-2-oxopyrrolidin-3-yl}acetamide + 5'-deoxyadenosine + L-methionine + A + H(+). Functionally, radical S-adenosylmethionine (SAM) enzyme responsible for the first step of the biosynthesis of the enzyme cofactor mycofactocin (MFT). Catalyzes two reactions at the C-terminus of the mycofactocin precursor (the MftA peptide). The first one is the oxidative decarboxylation of the C-terminal L-tyrosine of MftA, forming an unsaturated tyramine moiety. The second reaction is the cross-linking of the tyramine with the penultimate L-valine residue, forming a five-membered lactam ring. Its activity requires the presence of the MftB chaperone. This is Mycofactocin maturase MftC from Mycobacterium ulcerans (strain Agy99).